The sequence spans 507 residues: ATP synthase subunit alpha, plastid (507 aa).

170–177 (GDRQTGKT) is a binding site for ATP.

This sequence belongs to the ATPase alpha/beta chains family. As to quaternary structure, F-type ATPases have 2 components, CF(1) - the catalytic core - and CF(0) - the membrane proton channel. CF(1) has five subunits: alpha(3), beta(3), gamma(1), delta(1), epsilon(1). CF(0) has four main subunits: a, b, b' and c.

The protein resides in the plastid membrane. It catalyses the reaction ATP + H2O + 4 H(+)(in) = ADP + phosphate + 5 H(+)(out). In terms of biological role, produces ATP from ADP in the presence of a proton gradient across the membrane. The alpha chain is a regulatory subunit. The sequence is that of ATP synthase subunit alpha, plastid from Cuscuta obtusiflora (Peruvian dodder).